A 339-amino-acid chain; its full sequence is Small ribosomal subunit protein mS27 (339 aa).

The N-terminal 37 residues, 1–37, are a transit peptide targeting the mitochondrion; the sequence is MGTITVVINEGPILLIRALHRATTNKKMFRSTVWRRF.

This sequence belongs to the mitochondrion-specific ribosomal protein mS27 family. As to quaternary structure, component of the mitochondrial small ribosomal subunit (mt-SSU). Mature yeast 74S mitochondrial ribosomes consist of a small (37S) and a large (54S) subunit. The 37S small subunit contains a 15S ribosomal RNA (15S mt-rRNA) and 34 different proteins. The 54S large subunit contains a 21S rRNA (21S mt-rRNA) and 46 different proteins.

Its subcellular location is the mitochondrion. Component of the mitochondrial ribosome (mitoribosome), a dedicated translation machinery responsible for the synthesis of mitochondrial genome-encoded proteins, including at least some of the essential transmembrane subunits of the mitochondrial respiratory chain. The mitoribosomes are attached to the mitochondrial inner membrane and translation products are cotranslationally integrated into the membrane. The chain is Small ribosomal subunit protein mS27 (MRP13) from Saccharomyces cerevisiae (strain ATCC 204508 / S288c) (Baker's yeast).